The sequence spans 365 residues: Pre-mRNA-splicing factor srp2 (365 aa).

RRM domains follow at residues 6–69 (LFVG…RIVV) and 100–166 (LIVE…AVTL). The tract at residues 166-365 (LREDPDAANE…SAEGQVAAEW (200 aa)) is disordered. A compositionally biased stretch (basic residues) spans 184-194 (FRSRSPPARRR). Phosphoserine is present on residues S186, S188, S276, S294, S296, S298, and S308. Positions 195 to 307 (YRDDYRRGGD…SPRRDREENR (113 aa)) are enriched in basic and acidic residues. The span at 316-332 (SYSAAPEASMESSAPTE) shows a compositional bias: low complexity. Residues 341–353 (EEQQPLQNHSDVG) show a composition bias toward polar residues.

Belongs to the splicing factor SR family. In terms of processing, extensively phosphorylated on serine residues in the RS domain.

The protein resides in the nucleus. Has a role in pre-mRNA splicing where it is involved in spliceosome assembly. The polypeptide is Pre-mRNA-splicing factor srp2 (srp2) (Schizosaccharomyces pombe (strain 972 / ATCC 24843) (Fission yeast)).